The following is a 368-amino-acid chain: Uroporphyrinogen decarboxylase (368 aa).

Residues 41–45 (RQAGR), Asp-91, Tyr-168, Ser-223, and His-345 each bind substrate.

Belongs to the uroporphyrinogen decarboxylase family. Homodimer.

Its subcellular location is the cytoplasm. It carries out the reaction uroporphyrinogen III + 4 H(+) = coproporphyrinogen III + 4 CO2. Its pathway is porphyrin-containing compound metabolism; protoporphyrin-IX biosynthesis; coproporphyrinogen-III from 5-aminolevulinate: step 4/4. Functionally, catalyzes the decarboxylation of four acetate groups of uroporphyrinogen-III to yield coproporphyrinogen-III. The polypeptide is Uroporphyrinogen decarboxylase (Psychrobacter sp. (strain PRwf-1)).